The sequence spans 236 residues: Phosphoribosylaminoimidazole-succinocarboxamide synthase (236 aa).

This sequence belongs to the SAICAR synthetase family.

The catalysed reaction is 5-amino-1-(5-phospho-D-ribosyl)imidazole-4-carboxylate + L-aspartate + ATP = (2S)-2-[5-amino-1-(5-phospho-beta-D-ribosyl)imidazole-4-carboxamido]succinate + ADP + phosphate + 2 H(+). It participates in purine metabolism; IMP biosynthesis via de novo pathway; 5-amino-1-(5-phospho-D-ribosyl)imidazole-4-carboxamide from 5-amino-1-(5-phospho-D-ribosyl)imidazole-4-carboxylate: step 1/2. In Pseudomonas putida (strain ATCC 700007 / DSM 6899 / JCM 31910 / BCRC 17059 / LMG 24140 / F1), this protein is Phosphoribosylaminoimidazole-succinocarboxamide synthase.